Consider the following 260-residue polypeptide: Snake venom serine protease gussurobin (260 aa).

The signal sequence occupies residues Met1–Ala18. Positions Gln19 to Leu24 are excised as a propeptide. Residues Ile25–Ala251 form the Peptidase S1 domain. 6 disulfide bridges follow: Cys31–Cys165, Cys52–Cys68, Cys100–Cys258, Cys144–Cys212, Cys176–Cys191, and Cys202–Cys227. Catalysis depends on charge relay system residues His67 and Asp112. N-linked (GlcNAc...) asparagine glycans are attached at residues Asn123 and Asn124. The active-site Charge relay system is Ser206.

It belongs to the peptidase S1 family. Snake venom subfamily. In terms of assembly, monomer. As to expression, expressed by the venom gland.

Its subcellular location is the secreted. In terms of biological role, snake venom serine protease that may act in the hemostasis system of the prey. This is Snake venom serine protease gussurobin from Gloydius ussuriensis (Ussuri mamushi).